Here is a 51-residue protein sequence, read N- to C-terminus: SPbeta prophage-derived uncharacterized protein YorQ (51 aa).

The protein is SPbeta prophage-derived uncharacterized protein YorQ (yorQ) of Bacillus subtilis (strain 168).